A 231-amino-acid chain; its full sequence is Urease accessory protein UreF (231 aa).

Belongs to the UreF family. In terms of assembly, ureD, UreF and UreG form a complex that acts as a GTP-hydrolysis-dependent molecular chaperone, activating the urease apoprotein by helping to assemble the nickel containing metallocenter of UreC. The UreE protein probably delivers the nickel.

The protein resides in the cytoplasm. Its function is as follows. Required for maturation of urease via the functional incorporation of the urease nickel metallocenter. This Marinobacter nauticus (strain ATCC 700491 / DSM 11845 / VT8) (Marinobacter aquaeolei) protein is Urease accessory protein UreF.